A 300-amino-acid chain; its full sequence is Diphthine methyl ester synthase (300 aa).

S-adenosyl-L-methionine contacts are provided by residues leucine 9, aspartate 85, glycine 88, 113 to 114, and leucine 164; that span reads SV. A Phosphoserine modification is found at serine 172. S-adenosyl-L-methionine is bound by residues leucine 222 and histidine 247. Residue serine 298 is modified to Phosphoserine.

The protein belongs to the diphthine synthase family.

It is found in the cytoplasm. It catalyses the reaction 2-[(3S)-amino-3-carboxypropyl]-L-histidyl-[translation elongation factor 2] + 4 S-adenosyl-L-methionine = diphthine methyl ester-[translation elongation factor 2] + 4 S-adenosyl-L-homocysteine + 3 H(+). It functions in the pathway protein modification; peptidyl-diphthamide biosynthesis. Its function is as follows. S-adenosyl-L-methionine-dependent methyltransferase that catalyzes four methylations of the modified target histidine residue in translation elongation factor 2 (EF-2), to form an intermediate called diphthine methyl ester. The four successive methylation reactions represent the second step of diphthamide biosynthesis. This chain is Diphthine methyl ester synthase (DPH5), found in Saccharomyces cerevisiae (strain ATCC 204508 / S288c) (Baker's yeast).